Here is a 301-residue protein sequence, read N- to C-terminus: Pseudouridine-5'-phosphate glycosidase (301 aa).

The Proton donor role is filled by glutamate 25. Residues lysine 86 and valine 106 each contribute to the substrate site. Position 138 (aspartate 138) interacts with Mn(2+). 140–142 (SAD) is a binding site for substrate. Residue lysine 159 is the Nucleophile of the active site.

This sequence belongs to the pseudouridine-5'-phosphate glycosidase family. As to quaternary structure, homotrimer. Mn(2+) serves as cofactor.

The enzyme catalyses D-ribose 5-phosphate + uracil = psi-UMP + H2O. In terms of biological role, catalyzes the reversible cleavage of pseudouridine 5'-phosphate (PsiMP) to ribose 5-phosphate and uracil. Functions biologically in the cleavage direction, as part of a pseudouridine degradation pathway. This Geobacillus kaustophilus (strain HTA426) protein is Pseudouridine-5'-phosphate glycosidase.